The chain runs to 727 residues: MDNRKEPPFFNDDNMGPFYYRLHFCDTMELFIETLTGTCFELRVSPFETVISVKAKIRRLEGIPICRQHLIWNNMELENDYCLNDYNISEGCTLKLVLAMRGGPINTRRVPTDDPLRKMAEYLDSSRVEVWEKTSCSKQVTFLVYQEGDQLNFFPAVDRGDGTLTPLSDSSKKIDFHLHVLRRKGEHRMSGGSMYNSDTDEDEETEPSSSGQQIIENSITMNKMKLLKAKMKNMNLSKKPKKAVKIKPHPPVAPRPSSGSTAPSRHRLLRVLPNIGQSCSPAFGNAYPPEISRNGISSLATQLSAERYISSITGEFLKEDNSWENNTLSHFSSNVKLPPQIPHLELGNDQELADSVLHLGSSLPRQTKHFLGNLPSSNGNIVLPSEECVTEQSLLPKVGSLASFAEGNADEQSSGLEGACKVNLELLLTNADKGLKAPEQHLKHVAGVLNGESVETSVLNYRELSPHKNRLLSPLRCSAPMSLHNSLVKPERQSKCFEFGKLQPSSSQSLDVQNITDSSFSRTTCFQGVKVDSLGKRSDVISKVEARDITEMTNKASKEPVGCVNNISFLASLAGSTSRNRLQSTRGAGRLQNSGTGLSTNLQHFQEENFRKSSPQLEHTGVFLSTHGVGMNGNNAAAGKSVGECTTHHLPPVKAPLQTKKKTTNHCFLCGKKTGLASSYECRCGNNFCASHRYAETHGCTYDYKSAGRRYLHEANPVVNAPKLPKI.

Residues 28-103 enclose the Ubiquitin-like domain; that stretch reads MELFIETLTG…LKLVLAMRGG (76 aa). Disordered regions lie at residues 187-217 and 238-264; these read HRMS…IIEN and KKPK…TAPS. Residues 238–248 are compositionally biased toward basic residues; that stretch reads KKPKKAVKIKP. Residues 661–708 form an AN1-type zinc finger; the sequence is KKTTNHCFLCGKKTGLASSYECRCGNNFCASHRYAETHGCTYDYKSAG. Zn(2+) is bound by residues Cys667, Cys670, Cys682, Cys684, Cys689, His692, His698, and Cys700.

In Homo sapiens (Human), this protein is AN1-type zinc finger protein 4 (ZFAND4).